The chain runs to 295 residues: Ribosomal protein L11 methyltransferase (295 aa).

Positions 146, 167, 189, and 231 each coordinate S-adenosyl-L-methionine.

The protein belongs to the methyltransferase superfamily. PrmA family.

It localises to the cytoplasm. The catalysed reaction is L-lysyl-[protein] + 3 S-adenosyl-L-methionine = N(6),N(6),N(6)-trimethyl-L-lysyl-[protein] + 3 S-adenosyl-L-homocysteine + 3 H(+). Functionally, methylates ribosomal protein L11. The sequence is that of Ribosomal protein L11 methyltransferase from Vibrio cholerae serotype O1 (strain ATCC 39541 / Classical Ogawa 395 / O395).